Here is a 62-residue protein sequence, read N- to C-terminus: Putative antitoxin AF_1095 (62 aa).

This sequence belongs to the UPF0165 family.

Functionally, possibly the antitoxin component of a type II toxin-antitoxin (TA) system. This chain is Putative antitoxin AF_1095, found in Archaeoglobus fulgidus (strain ATCC 49558 / DSM 4304 / JCM 9628 / NBRC 100126 / VC-16).